The following is a 130-amino-acid chain: Small ribosomal subunit protein uS9 (130 aa).

The protein belongs to the universal ribosomal protein uS9 family.

The polypeptide is Small ribosomal subunit protein uS9 (Geobacillus thermodenitrificans (strain NG80-2)).